Consider the following 496-residue polypeptide: MARFVVAGASEYLAITGWGIDDVKLAKKAWVFAGQKCLKFDATPVSYDIDVQAMSSEKLPFRLPAAYTIGPSPKIKRNPVVDGPAPPADTQRRLEDCDEEALLLYAKLIAASQIRSPNHVIDLVKGVIEGETRVLASSMTMEEIFQGTKKFKQQVFDQVQLALNELGLYIYSANVKQLVDDPDSPGNDYFSFLGQKRQAEVEGKAKVAEAEARMKGEIGAKEREGLTLQNAAKVDAETKVLSARQQGVGCREEIKVKADVEVYENEREADIAAARAALAVKKAGLDKQSKVAEVEAVKAVVVREAELQLEVERKNALRLTEKLKAEKLSKATVQYETQVQDSNAALYDRQMAADATLFEQVKSAEARKAQAGAKFFEQKLAEDARLYARQREAEALAGVGRAKAELVASMLQELGGDHGALRDSLMIDGGVYEEVARVNASAMSGIQPKISIRSRAGGANAGASSAGAVQQVAAADVYDMLPPFLQSSGGFNKLPL.

C37 carries the S-palmitoyl cysteine lipid modification. A coiled-coil region spans residues 301–328 (VVREAELQLEVERKNALRLTEKLKAEKL).

The protein belongs to the band 7/mec-2 family. Flotillin subfamily. Post-translationally, may be palmitoylated.

The protein localises to the cell membrane. The protein resides in the membrane. It is found in the caveola. In terms of biological role, may act as a scaffolding protein within caveolar membranes, functionally participating in formation of caveolae or caveolae-like vesicles. This is Flotillin-like protein 3 (FLOT3) from Oryza sativa subsp. japonica (Rice).